Consider the following 157-residue polypeptide: Phosphopantetheine adenylyltransferase (157 aa).

T10 contacts substrate. ATP contacts are provided by residues 10–11 (TF) and H18. Substrate-binding residues include K42, L74, and R88. Residues 89–91 (GLR), E99, and 124–130 (NAFISSS) contribute to the ATP site.

The protein belongs to the bacterial CoaD family. As to quaternary structure, homohexamer. Mg(2+) serves as cofactor.

The protein localises to the cytoplasm. The catalysed reaction is (R)-4'-phosphopantetheine + ATP + H(+) = 3'-dephospho-CoA + diphosphate. The protein operates within cofactor biosynthesis; coenzyme A biosynthesis; CoA from (R)-pantothenate: step 4/5. Functionally, reversibly transfers an adenylyl group from ATP to 4'-phosphopantetheine, yielding dephospho-CoA (dPCoA) and pyrophosphate. This Helicobacter pylori (strain P12) protein is Phosphopantetheine adenylyltransferase.